Consider the following 859-residue polypeptide: DNA mismatch repair protein MutS (859 aa).

Position 612–619 (612–619 (GPNMGGKS)) interacts with ATP. The tract at residues 797–822 (SKPLAPSATPPSSYAAPSPAAAPAQA) is disordered.

This sequence belongs to the DNA mismatch repair MutS family.

This protein is involved in the repair of mismatches in DNA. It is possible that it carries out the mismatch recognition step. This protein has a weak ATPase activity. The protein is DNA mismatch repair protein MutS of Alcanivorax borkumensis (strain ATCC 700651 / DSM 11573 / NCIMB 13689 / SK2).